The chain runs to 518 residues: Voltage-gated potassium channel regulatory subunit KCNG2 (518 aa).

The Cytoplasmic segment spans residues 1 to 214 (MALLTGNADR…DMVENPHSGI (214 aa)). The helical transmembrane segment at 215 to 236 (PGKIFACISISFVAITAVSLCI) threads the bilayer. The Extracellular portion of the chain corresponds to 237–257 (STMPDVREEEDRGECSQKCYD). A helical membrane pass occupies residues 258–279 (IFVLETVCVAWFSFEFLLRSIQ). Over 280-290 (AENKCAFLKTP) the chain is Cytoplasmic. A helical membrane pass occupies residues 291–311 (LNIIDILAILPFYISLIVDMA). Over 312–331 (STKNSSKPGGGAGNKYLERV) the chain is Extracellular. The chain crosses the membrane as a helical; Voltage-sensor span at residues 332-352 (GLVLRFLRALRILYVMRLARH). At 353-367 (SLGLQTLGLTVRRCT) the chain is on the cytoplasmic side. The helical transmembrane segment at 368-389 (REFGLLLLFLCVAMALFSPLVY) threads the bilayer. Residues 390–404 (LAESELGAKQEFTSI) are Extracellular-facing. The helical intramembrane region spans 405–416 (PTSYWWAVISMT). The Selectivity filter motif lies at 417-422 (TVGYGD). An intramembrane segment occupies 417–424 (TVGYGDMV). Topologically, residues 425–431 (PRSIPGQ) are extracellular. Residues 432-460 (VVALSSILSGILLMAFPVTSIFHTFSRSY) traverse the membrane as a helical segment. The Cytoplasmic segment spans residues 461–518 (SELKEQQQRAASRQMHQLEESTKLAGGGSSQWITAASPPDAAREDGRPELDQEAKRSC). A disordered region spans residues 473-518 (RQMHQLEESTKLAGGGSSQWITAASPPDAAREDGRPELDQEAKRSC). A compositionally biased stretch (basic and acidic residues) spans 501-518 (AAREDGRPELDQEAKRSC).

This sequence belongs to the potassium channel family. G (TC 1.A.1.2) subfamily. Kv6.2/KCNG2 sub-subfamily. Heterodimer with KCNB1.

It is found in the cell membrane. Its function is as follows. Regulatory alpha-subunit of the voltage-gated potassium (Kv) channel which, when coassembled with KCNB1, can modulate the kinetics and conductance-voltage relationship. Modulates channel activity by shifting the threshold and the half-maximal activation to more negative values. Potassium channel subunit that does not form functional channels by itself. This is Voltage-gated potassium channel regulatory subunit KCNG2 from Gallus gallus (Chicken).